Consider the following 61-residue polypeptide: Three-finger hemachatoxin (61 aa).

4 disulfide bridges follow: Cys-3/Cys-22, Cys-15/Cys-39, Cys-43/Cys-54, and Cys-55/Cys-60.

The protein belongs to the three-finger toxin family. Short-chain subfamily. Type IB cytotoxin sub-subfamily. As to expression, expressed by the venom gland.

Its subcellular location is the secreted. Its function is as follows. This protein lyses red blood cells and has cardiotoxic and hypotensive activities. The protein is Three-finger hemachatoxin of Hemachatus haemachatus (Rinkhals).